The sequence spans 315 residues: DDRGK domain-containing protein 1 (315 aa).

The chain crosses the membrane as a helical span at residues 1-28 (MVGPWVYLVAAVLLIGLILFLTRSRGRA). The tract at residues 1–115 (MVGPWVYLVA…IEKPAEVHPT (115 aa)) is mediates interaction with CDK5RAP3. Residues 29–315 (AAADGEPLHN…GQDLPAQASA (287 aa)) lie on the Cytoplasmic side of the membrane. The tract at residues 30-184 (AADGEPLHNE…ERKAQEEQAR (155 aa)) is disordered. A compositionally biased stretch (basic and acidic residues) spans 34–43 (EPLHNEEERA). The residue at position 73 (serine 73) is a Phosphoserine. The tract at residues 119 to 217 (GAKKLRKLEE…MTEEQSHSFL (99 aa)) is mediates interaction with TRIP4. Residues 125 to 184 (KLEEKQARKAQREAEEAEREERKRLESQREAEWKKEEERLRLKEEQKEEEERKAQEEQAR) are compositionally biased toward basic and acidic residues. The short motif at 196–210 (AFVVEEEGVSETMTE) is the UFM1-interacting motif (UFIM) element. Positions 217–315 (LTEFINYIKK…GQDLPAQASA (99 aa)) are mediates interaction with UFL1. The PCI domain maps to 230–274 (VLLEDLAFQMGLRTQDAINRIQDLLTEGTLTGVIDDRGKFIYITP). Residue lysine 268 forms a Glycyl lysine isopeptide (Lys-Gly) (interchain with G-Cter in UFM1) linkage.

Belongs to the DDRGK1 family. In terms of assembly, component of the UFM1 ribosome E3 ligase (UREL) complex, composed of UFL1, DDRGK1 and CDK5RAP3. Interacts with (unphosphorylated) ERN1/IRE1-alpha; interaction is dependent on UFM1 and takes place in response to endoplasmic reticulum stress, regulating ERN1/IRE1-alpha stability. Interacts with NFKBIA. Interacts with SOX9. In terms of processing, ufmylated; conjugated to ubiquitin-like protein UFM1, probably at Lys-268 by UFL1. The relevance of ufmylation is however unclear: as DDRGK1 acts as a substrate adapter for ufmylation, it is uncertain whether ufmylation is a collateral effect of the ufmylation process or whether it is required to regulate its activity. Post-translationally, ubiquitinated. Ubiquitination probably triggers proteasomal degradation and is negatively regulated by UFL1, the enzyme involved in the ufmylation of DDRGK1. As to expression, ubiquitously expressed. Higher expression in pancreatic islets, pancreatic acini and testis (at protein level). Highly expressed in the intestinal exocrine cells.

It localises to the endoplasmic reticulum membrane. In terms of biological role, component of the UFM1 ribosome E3 ligase (UREL) complex, a multiprotein complex that catalyzes ufmylation of endoplasmic reticulum-docked proteins. The UREL complex plays a key role in ribosome recycling by mediating mono-ufmylation of the RPL26/uL24 subunit of the 60S ribosome following ribosome dissociation: ufmylation weakens the junction between post-termination 60S subunits and SEC61 translocons, promoting release and recycling of the large ribosomal subunit from the endoplasmic reticulum membrane. Ufmylation of RPL26/uL24 and subsequent 60S ribosome recycling either take place after normal termination of translation or after ribosome stalling during cotranslational translocation at the endoplasmic reticulum. Within the UREL complex, DDRGK1 tethers the complex to the endoplasmic reticulum membrane to restrict its activity to endoplasmic reticulum-docked ribosomes and acts as an ufmylation 'reader': following RPL26/uL24 ufmylation, DDRGK1 specifically binds to ufmylated RPL26/uL24 via its UFIM motif, resulting in stable association between the 60S ribosome and the UREL complex, followed by dissociation of the 60S ribosome subunit from the endoplasmic reticulum membrane. The UREL complex is also involved in reticulophagy in response to endoplasmic reticulum stress by promoting ufmylation of proteins such as CYB5R3 and RPN1, thereby promoting lysosomal degradation of ufmylated proteins. Ufmylation-dependent reticulophagy inhibits the unfolded protein response (UPR) by regulating ERN1/IRE1-alpha stability. Acts as a regulator of immunity by promoting differentiation of B-cells into plasma cells: acts by promoting expansion of the endoplasmic reticulum and regulating the unfolded protein response (UPR). May also be required for TRIP4 ufmylation. May play a role in NF-kappa-B-mediated transcription through regulation of the phosphorylation and the degradation of NFKBIA, the inhibitor of NF-kappa-B. Plays a role in cartilage development through SOX9, inhibiting the ubiquitin-mediated proteasomal degradation of this transcriptional regulator. Required for stabilization and ufmylation of ATG9A. In Mus musculus (Mouse), this protein is DDRGK domain-containing protein 1.